A 154-amino-acid polypeptide reads, in one-letter code: 6,7-dimethyl-8-ribityllumazine synthase (154 aa).

5-amino-6-(D-ribitylamino)uracil contacts are provided by residues Phe22, 57-59 (AYE), and 81-83 (AVI). 86 to 87 (GT) is a binding site for (2S)-2-hydroxy-3-oxobutyl phosphate. The Proton donor role is filled by His89. Residue Phe114 coordinates 5-amino-6-(D-ribitylamino)uracil. Arg128 lines the (2S)-2-hydroxy-3-oxobutyl phosphate pocket.

Belongs to the DMRL synthase family. In terms of assembly, forms an icosahedral capsid composed of 60 subunits, arranged as a dodecamer of pentamers.

It carries out the reaction (2S)-2-hydroxy-3-oxobutyl phosphate + 5-amino-6-(D-ribitylamino)uracil = 6,7-dimethyl-8-(1-D-ribityl)lumazine + phosphate + 2 H2O + H(+). Its pathway is cofactor biosynthesis; riboflavin biosynthesis; riboflavin from 2-hydroxy-3-oxobutyl phosphate and 5-amino-6-(D-ribitylamino)uracil: step 1/2. In terms of biological role, catalyzes the formation of 6,7-dimethyl-8-ribityllumazine by condensation of 5-amino-6-(D-ribitylamino)uracil with 3,4-dihydroxy-2-butanone 4-phosphate. This is the penultimate step in the biosynthesis of riboflavin. The sequence is that of 6,7-dimethyl-8-ribityllumazine synthase from Colwellia psychrerythraea (strain 34H / ATCC BAA-681) (Vibrio psychroerythus).